Reading from the N-terminus, the 194-residue chain is MQLEATPRGTGSRASRRLRQAGFVPGIIYGPGVEPLAVSVRSTQLERLVERQGRGHLIHVQVEGEANPRQVVIKQLQRDILTQQVTHVDFLQVDMNRTITLTVPIVVVGEEQARRRGLLITHELDEVEVECRPTEIPEAVTLDVSGLTEPGPVTAASLSAPPGVRVLEDPDTVVVSCTVIGGGEEEEASTGPAA.

Belongs to the bacterial ribosomal protein bL25 family. CTC subfamily. Part of the 50S ribosomal subunit; part of the 5S rRNA/L5/L18/L25 subcomplex. Contacts the 5S rRNA. Binds to the 5S rRNA independently of L5 and L18.

Functionally, this is one of the proteins that binds to the 5S RNA in the ribosome where it forms part of the central protuberance. The chain is Large ribosomal subunit protein bL25B from Symbiobacterium thermophilum (strain DSM 24528 / JCM 14929 / IAM 14863 / T).